The following is a 239-amino-acid chain: Uridylate kinase (239 aa).

Lys-12–Gly-15 contributes to the ATP binding site. Residue Gly-53 coordinates UMP. ATP-binding residues include Gly-54 and Arg-58. UMP is bound by residues Asp-73 and Thr-135 to Thr-142. ATP-binding residues include Thr-162, Tyr-168, and Asp-171.

It belongs to the UMP kinase family. In terms of assembly, homohexamer.

It localises to the cytoplasm. It carries out the reaction UMP + ATP = UDP + ADP. It participates in pyrimidine metabolism; CTP biosynthesis via de novo pathway; UDP from UMP (UMPK route): step 1/1. Its activity is regulated as follows. Inhibited by UTP. Catalyzes the reversible phosphorylation of UMP to UDP. This chain is Uridylate kinase, found in Ruthia magnifica subsp. Calyptogena magnifica.